We begin with the raw amino-acid sequence, 261 residues long: Cytochrome c oxidase subunit 3 (261 aa).

At 1–15 (MTHQTHAYHMVNPSP) the chain is on the mitochondrial matrix side. Residues 16–34 (WPLTGALSALLMTSGLIMW) traverse the membrane as a helical segment. Residues 35–40 (FHFNST) lie on the Mitochondrial intermembrane side of the membrane. The chain crosses the membrane as a helical span at residues 41–66 (TLLMLGLTTNMLTMYQWWRDVIREST). The Mitochondrial matrix portion of the chain corresponds to 67–72 (FQGHHT). The helical transmembrane segment at 73 to 105 (PNVQKGLRYGMILFIISEVLFFTGFFWAFYHSS) threads the bilayer. The Mitochondrial intermembrane portion of the chain corresponds to 106 to 128 (LAPTPELGGCWPPTGINPLNPLE). Residues 129–152 (VPLLNTSVLLASGVSITWAHHSLM) form a helical membrane-spanning segment. Residues 153–155 (EGN) lie on the Mitochondrial matrix side of the membrane. The helical transmembrane segment at 156–183 (RNHMLQALFITIALGVYFTLLQASEYYE) threads the bilayer. Topologically, residues 184–190 (APFTISD) are mitochondrial intermembrane. A helical membrane pass occupies residues 191–223 (GVYGSTFFVATGFHGLHVIIGSTFLIVCFFRQL). Over 224–232 (KFHFTSNHH) the chain is Mitochondrial matrix. The chain crosses the membrane as a helical span at residues 233–256 (FGFEAAAWYWHFVDVVWLFLYVSI). Topologically, residues 257-261 (YWWGS) are mitochondrial intermembrane.

It belongs to the cytochrome c oxidase subunit 3 family. In terms of assembly, component of the cytochrome c oxidase (complex IV, CIV), a multisubunit enzyme composed of 14 subunits. The complex is composed of a catalytic core of 3 subunits MT-CO1, MT-CO2 and MT-CO3, encoded in the mitochondrial DNA, and 11 supernumerary subunits COX4I, COX5A, COX5B, COX6A, COX6B, COX6C, COX7A, COX7B, COX7C, COX8 and NDUFA4, which are encoded in the nuclear genome. The complex exists as a monomer or a dimer and forms supercomplexes (SCs) in the inner mitochondrial membrane with NADH-ubiquinone oxidoreductase (complex I, CI) and ubiquinol-cytochrome c oxidoreductase (cytochrome b-c1 complex, complex III, CIII), resulting in different assemblies (supercomplex SCI(1)III(2)IV(1) and megacomplex MCI(2)III(2)IV(2)).

It localises to the mitochondrion inner membrane. The enzyme catalyses 4 Fe(II)-[cytochrome c] + O2 + 8 H(+)(in) = 4 Fe(III)-[cytochrome c] + 2 H2O + 4 H(+)(out). Component of the cytochrome c oxidase, the last enzyme in the mitochondrial electron transport chain which drives oxidative phosphorylation. The respiratory chain contains 3 multisubunit complexes succinate dehydrogenase (complex II, CII), ubiquinol-cytochrome c oxidoreductase (cytochrome b-c1 complex, complex III, CIII) and cytochrome c oxidase (complex IV, CIV), that cooperate to transfer electrons derived from NADH and succinate to molecular oxygen, creating an electrochemical gradient over the inner membrane that drives transmembrane transport and the ATP synthase. Cytochrome c oxidase is the component of the respiratory chain that catalyzes the reduction of oxygen to water. Electrons originating from reduced cytochrome c in the intermembrane space (IMS) are transferred via the dinuclear copper A center (CU(A)) of subunit 2 and heme A of subunit 1 to the active site in subunit 1, a binuclear center (BNC) formed by heme A3 and copper B (CU(B)). The BNC reduces molecular oxygen to 2 water molecules using 4 electrons from cytochrome c in the IMS and 4 protons from the mitochondrial matrix. The protein is Cytochrome c oxidase subunit 3 (MT-CO3) of Gazella subgutturosa (Goitred gazelle).